A 235-amino-acid polypeptide reads, in one-letter code: Large ribosomal subunit protein uL1 (235 aa).

This sequence belongs to the universal ribosomal protein uL1 family. As to quaternary structure, part of the 50S ribosomal subunit.

Binds directly to 23S rRNA. The L1 stalk is quite mobile in the ribosome, and is involved in E site tRNA release. Functionally, protein L1 is also a translational repressor protein, it controls the translation of the L11 operon by binding to its mRNA. This is Large ribosomal subunit protein uL1 from Pseudarthrobacter chlorophenolicus (strain ATCC 700700 / DSM 12829 / CIP 107037 / JCM 12360 / KCTC 9906 / NCIMB 13794 / A6) (Arthrobacter chlorophenolicus).